We begin with the raw amino-acid sequence, 371 residues long: Deoxyguanosinetriphosphate triphosphohydrolase-like protein (371 aa).

Positions 62-200 (RITHSIEVAQ…SAISDDIAYN (139 aa)) constitute an HD domain.

Belongs to the dGTPase family. Type 2 subfamily.

The chain is Deoxyguanosinetriphosphate triphosphohydrolase-like protein from Pelagibacter ubique (strain HTCC1062).